The chain runs to 361 residues: BBSome complex member bbs-5 (361 aa).

Belongs to the BBS5 family. As to quaternary structure, part of BBSome complex, that contains at least bbs-1, bbs-2, bbs-4, bbs-5, osm-12, bbs-8/ttc-8 and bbs-9. Interacts with bbs-4 (via C-terminus); the interaction is direct.

It localises to the cell projection. The protein localises to the cilium membrane. Its subcellular location is the cytoplasm. It is found in the cytoskeleton. The protein resides in the cilium basal body. It localises to the microtubule organizing center. The protein localises to the centrosome. Its subcellular location is the centriolar satellite. Its function is as follows. Component of the BBSome complex. The BBSome complex is thought to function as a coat complex required for sorting of specific membrane proteins to the primary cilia. The BBSome complex is required for ciliogenesis but is dispensable for centriolar satellite function. Required for BBSome complex ciliary localization but not for the proper complex assembly. Required, redundantly with bbs-4, for cilia biogenesis and both the assembly and movement of intraflagellar transport proteins along the ciliary axoneme. Plays a role in the removal of degraded mechanosensory receptors within the cilia. This is BBSome complex member bbs-5 from Caenorhabditis elegans.